Reading from the N-terminus, the 1012-residue chain is Formate dehydrogenase 2 subunit alpha (cytochrome c-553) (1012 aa).

Positions 1 to 33 form a signal peptide, tat-type signal; it reads MKTTRRSFLKLVGVSVVGLSLGQLGFDLEDAQA. In terms of domain architecture, 4Fe-4S Mo/W bis-MGD-type spans 43–99; that stretch reads AKEVGTVCPFCSVCCQVIAYVRNGKLVSTEGDPDFPVNEGALCAKGAALFSMYTNPH. Positions 50, 53, 57, and 85 each coordinate [4Fe-4S] cluster. U189 provides a ligand contact to W-bis(molybdopterin guanine dinucleotide). Position 189 (U189) is a non-standard amino acid, selenocysteine. Residues T389, R391, K394, L424, and N426 each coordinate Ca(2+).

It belongs to the prokaryotic molybdopterin-containing oxidoreductase family. Heterotrimer of cytochrome c3 FDH2C and formate dehydrogenase FDH2 alpha and beta subunits that forms the FdhABC(3) complex. Requires [4Fe-4S] cluster as cofactor. It depends on W-bis(molybdopterin guanine dinucleotide) as a cofactor. Predicted to be exported by the Tat system. The position of the signal peptide cleavage has not been experimentally proven.

The protein resides in the periplasm. The enzyme catalyses 2 Fe(III)-[cytochrome c553] + formate = 2 Fe(II)-[cytochrome c553] + CO2 + H(+). Functionally, alpha chain of the formate dehydrogenase (FDH) that catalyzes the reversible two-electron oxidation of formate to carbon dioxide. The alpha subunit of formate dehydrogenase forms the active site. The protein is Formate dehydrogenase 2 subunit alpha (cytochrome c-553) of Nitratidesulfovibrio vulgaris (strain ATCC 29579 / DSM 644 / CCUG 34227 / NCIMB 8303 / VKM B-1760 / Hildenborough) (Desulfovibrio vulgaris).